Consider the following 228-residue polypeptide: MKKKAVILLSGGPDSTTVLEIVSKMDYEIYALSFNYHRRNSPEVQKIQGLIKDYNVKQHRVINIDLQSFIGSALTDDNIDVPKFKHTDQLPSDIPVTYVPARNTIFLSYALGVAEVIGARDIFIGVHTNDYTNYPDCRPEYIKSFEAMANLATRVGVNGEKITIHAPLINMTKEQIIKKGLELGVDYSKTISCYDPTEAGLSCGQCLSCIARLDAFKKNNVQDPIKYV.

An ATP-binding site is contributed by 9 to 19 (LSGGPDSTTVL). Residues Cys-193, Cys-203, Cys-206, and Cys-209 each coordinate Zn(2+).

Belongs to the QueC family. It depends on Zn(2+) as a cofactor.

The catalysed reaction is 7-carboxy-7-deazaguanine + NH4(+) + ATP = 7-cyano-7-deazaguanine + ADP + phosphate + H2O + H(+). It participates in purine metabolism; 7-cyano-7-deazaguanine biosynthesis. Functionally, catalyzes the ATP-dependent conversion of 7-carboxy-7-deazaguanine (CDG) to 7-cyano-7-deazaguanine (preQ(0)). The protein is 7-cyano-7-deazaguanine synthase of Rickettsia massiliae (strain Mtu5).